Reading from the N-terminus, the 181-residue chain is Large ribosomal subunit protein uL5 (181 aa).

The protein belongs to the universal ribosomal protein uL5 family. As to quaternary structure, part of the 50S ribosomal subunit; part of the 5S rRNA/L5/L18/L25 subcomplex. Contacts the 5S rRNA and the P site tRNA. Forms a bridge to the 30S subunit in the 70S ribosome.

Functionally, this is one of the proteins that bind and probably mediate the attachment of the 5S RNA into the large ribosomal subunit, where it forms part of the central protuberance. In the 70S ribosome it contacts protein S13 of the 30S subunit (bridge B1b), connecting the 2 subunits; this bridge is implicated in subunit movement. Contacts the P site tRNA; the 5S rRNA and some of its associated proteins might help stabilize positioning of ribosome-bound tRNAs. The polypeptide is Large ribosomal subunit protein uL5 (Campylobacter lari (strain RM2100 / D67 / ATCC BAA-1060)).